Reading from the N-terminus, the 1721-residue chain is Latent-transforming growth factor beta-binding protein 1 (1721 aa).

Positions 1-23 are cleaved as a signal peptide; that stretch reads MAGAWLRWGLLLWAGLLASSAHG. The span at 64–81 shows a compositional bias: low complexity; sequence RSSAAAGAPSRASPGVPS. The disordered stretch occupies residues 64–158; that stretch reads RSSAAAGAPS…SGGGSRLQVH (95 aa). Residues 99–111 are compositionally biased toward pro residues; the sequence is RPPPPPPPEPARP. A compositionally biased stretch (low complexity) spans 112 to 130; it reads AVPGGQLHPNPGGHPAAAP. The region spanning 187–219 is the EGF-like 1 domain; that stretch reads TKPSCVPPCQNGGMCLRPQLCVCKPGTKGKACE. Disulfide bonds link cysteine 191-cysteine 201, cysteine 195-cysteine 207, and cysteine 209-cysteine 218. The interval 228–259 is disordered; sequence SPVFGGQSPGAASSWGPPEQAAKHTSSKKADT. Residues asparagine 347 and asparagine 378 are each glycosylated (N-linked (GlcNAc...) asparagine). Residues 399-431 enclose the EGF-like 2 domain; that stretch reads RVVICHLPCMNGGQCSSRDKCQCPPNFTGKLCQ. Cystine bridges form between cysteine 403/cysteine 413, cysteine 407/cysteine 419, cysteine 421/cysteine 430, cysteine 559/cysteine 581, cysteine 568/cysteine 594, and cysteine 582/cysteine 597. N-linked (GlcNAc...) asparagine glycosylation occurs at asparagine 424. Residues 557–609 enclose the TB 1 domain; sequence GRCFQETIGSQCGKALPGLSKQEDCCGTVGTSWGFNKCQKCPKKPSYHGYNQM. N-linked (GlcNAc...) asparagine glycosylation is present at asparagine 620. Positions 626–663 constitute an EGF-like 3; calcium-binding domain; it reads DINECQLQGVCPNGECLNTMGSYRCTCKIGFGPDPTFS. Disulfide bonds link cysteine 630–cysteine 641, cysteine 636–cysteine 650, cysteine 652–cysteine 665, cysteine 679–cysteine 702, cysteine 689–cysteine 714, cysteine 703–cysteine 717, and cysteine 704–cysteine 729. The O-linked (Glc) serine glycan is linked to serine 647. A TB 2 domain is found at 677–729; it reads GPCYRLVSSGRQCMHPLSVHLTKQLCCCSVGKAWGPHCEKCPLPGTAAFKEIC. Positions 750–811 are disordered; it reads VGKGPVFVKP…APPEKEIPSL (62 aa). O-linked (GalNAc...) threonine glycosylation is found at threonine 769 and threonine 801. The region spanning 873–910 is the EGF-like 4; calcium-binding domain; that stretch reads EINECTVNPDICGAGHCINLPVRYTCICYEGYRFSEQQ. Cystine bridges form between cysteine 877–cysteine 889, cysteine 884–cysteine 898, cysteine 900–cysteine 913, cysteine 919–cysteine 931, cysteine 926–cysteine 940, cysteine 942–cysteine 955, cysteine 961–cysteine 972, cysteine 967–cysteine 981, cysteine 984–cysteine 996, cysteine 1002–cysteine 1013, cysteine 1008–cysteine 1022, cysteine 1025–cysteine 1036, cysteine 1042–cysteine 1053, cysteine 1048–cysteine 1062, cysteine 1064–cysteine 1077, cysteine 1083–cysteine 1094, cysteine 1089–cysteine 1103, cysteine 1105–cysteine 1118, cysteine 1124–cysteine 1135, cysteine 1130–cysteine 1144, cysteine 1146–cysteine 1159, cysteine 1165–cysteine 1177, cysteine 1172–cysteine 1186, cysteine 1188–cysteine 1200, cysteine 1206–cysteine 1218, cysteine 1212–cysteine 1227, cysteine 1229–cysteine 1242, cysteine 1248–cysteine 1260, and cysteine 1254–cysteine 1269. The EGF-like 5; calcium-binding domain maps to 915 to 956; sequence DIDECTQVQHLCSQGRCENTEGSFLCICPAGFMASEEGTNCI. Serine 937 is a glycosylation site (O-linked (Glc) serine). An EGF-like 6; calcium-binding domain is found at 957-997; sequence DVDECLRPDVCGEGHCVNTVGAFRCEYCDSGYRMTQRGRCE. At asparagine 974 the chain carries (3R)-3-hydroxyasparagine. The EGF-like 7; calcium-binding domain maps to 998–1037; it reads DIDECLNPSTCPDEQCVNSPGSYQCVPCTEGFRGWNGQCL. The O-linked (Glc) serine glycan is linked to serine 1019. In terms of domain architecture, EGF-like 8; calcium-binding spans 1038-1078; that stretch reads DVDECLEPNVCANGDCSNLEGSYMCSCHKGYTRTPDHKHCR. O-linked (Glc) serine glycosylation occurs at serine 1059. The 41-residue stretch at 1079 to 1119 folds into the EGF-like 9; calcium-binding domain; it reads DIDECQQGNLCVNGQCKNTEGSFRCTCGQGYQLSAAKDQCE. Residues 1120 to 1160 enclose the EGF-like 10; calcium-binding domain; it reads DIDECQHRHLCAHGQCRNTEGSFQCVCDQGYRASGLGDHCE. Asparagine 1137 bears the (3R)-3-hydroxyasparagine mark. A glycan (O-linked (Glc) serine) is linked at serine 1141. The EGF-like 11; calcium-binding domain maps to 1161–1201; sequence DINECLEDKSVCQRGDCINTAGSYDCTCPDGFQLDDNKTCQ. Residues 1174–1176 carry the Cell attachment site motif; that stretch reads RGD. Asparagine 1197 is a glycosylation site (N-linked (GlcNAc...) asparagine). An EGF-like 12; calcium-binding domain is found at 1202–1243; that stretch reads DINECEHPGLCGPQGECLNTEGSFHCVCQQGFSISADGRTCE. O-linked (Glc) serine glycosylation occurs at serine 1224. One can recognise an EGF-like 13; calcium-binding domain in the interval 1244-1281; that stretch reads DIDECVNNTVCDSHGFCDNTAGSFRCLCYQGFQAPQDG. Asparagine 1250 is a glycosylation site (N-linked (GlcNAc...) asparagine). Residues 1286-1328 form the EGF-like 14; calcium-binding domain; that stretch reads DVNECELLSGVCGEAFCENVEGSFLCVCADENQEYSPMTGQCR. An 8-Cys3 region region spans residues 1344–1411; sequence EEKKECYYNL…PKGKGFVPAG (68 aa). In terms of domain architecture, TB 3 spans 1347-1401; that stretch reads KECYYNLNDASLCDNVLAPNVTKQECCCTSGVGWGDNCEIFPCPVLGTAEFTEMC. 4 cysteine pairs are disulfide-bonded: cysteine 1349/cysteine 1372, cysteine 1359/cysteine 1384, cysteine 1373/cysteine 1389, and cysteine 1374/cysteine 1401. N-linked (GlcNAc...) asparagine glycosylation occurs at asparagine 1366. Residue serine 1414 is modified to Phosphoserine; by FAM20C. One can recognise an EGF-like 15; calcium-binding domain in the interval 1424–1466; the sequence is DADECLLFGQEICKNGFCLNTRPGYECYCKQGTYYDPVKLQCF. The EGF-like 16; calcium-binding domain occupies 1467 to 1503; that stretch reads DMDECQDPSSCIDGQCVNTEGSYNCFCTHPMVLDASE. 6 disulfide bridges follow: cysteine 1471/cysteine 1482, cysteine 1477/cysteine 1491, cysteine 1526/cysteine 1550, cysteine 1536/cysteine 1562, cysteine 1551/cysteine 1565, and cysteine 1552/cysteine 1577. Residue serine 1488 is glycosylated (O-linked (Glc) serine). A C-terminal domain region spans residues 1507-1721; that stretch reads IRPAESNEQI…LNLEKDSDLE (215 aa). A TB 4 domain is found at 1524 to 1577; the sequence is DLCWEHLSDEYVCSRPLVGKQTTYTECCCLYGEAWGMQCALCPLKDSDDYAQLC. Residues serine 1597 and serine 1616 each carry the phosphoserine modification. The 37-residue stretch at 1621–1657 folds into the EGF-like 17 domain; that stretch reads QAEECGILNGCENGRCVRVQEGYTCDCFDGYHLDTAK. Intrachain disulfides connect cysteine 1625/cysteine 1636, cysteine 1631/cysteine 1645, cysteine 1666/cysteine 1681, cysteine 1676/cysteine 1690, and cysteine 1692/cysteine 1705. The 45-residue stretch at 1662 to 1706 folds into the EGF-like 18; calcium-binding domain; that stretch reads DVNECDELNNRMSLCKNAKCINTDGSYKCLCLPGYVPSDKPNYCT. Serine 1687 carries an O-linked (Glc) serine glycan.

It belongs to the LTBP family. In terms of assembly, interacts with TGFB1; associates via disulfide bonds with the Latency-associated peptide chain (LAP) regulatory chain of TGFB1, leading to regulate activation of TGF-beta-1. LTBP1 does not bind directly to TGF-beta-1, the active chain of TGFB1. Interacts (via C-terminal domain) with FBN1 (via N-terminal domain). Interacts with FBN2. Interacts with ADAMTSL2. Interacts with EFEMP2. Contains hydroxylated asparagine residues. In terms of processing, isoform Short N-terminus is blocked. Post-translationally, two intrachain disulfide bonds from the TB3 domain are rearranged upon TGFB1 binding, and form interchain bonds with TGFB1 propeptide, anchoring it to the extracellular matrix. O-glycosylated on serine residues by POGLUT2 and POGLUT3. Expressed in the aorta (at protein level). Isoform Long: Expressed in fibroblasts.

The protein localises to the secreted. The protein resides in the extracellular space. It localises to the extracellular matrix. Its function is as follows. Key regulator of transforming growth factor beta (TGFB1, TGFB2 and TGFB3) that controls TGF-beta activation by maintaining it in a latent state during storage in extracellular space. Associates specifically via disulfide bonds with the Latency-associated peptide (LAP), which is the regulatory chain of TGF-beta, and regulates integrin-dependent activation of TGF-beta. Outcompeted by LRRC32/GARP for binding to LAP regulatory chain of TGF-beta. The protein is Latent-transforming growth factor beta-binding protein 1 of Homo sapiens (Human).